The following is a 715-amino-acid chain: Fatty acid oxidation complex subunit alpha (715 aa).

The enoyl-CoA hydratase stretch occupies residues 1 to 190 (MTTTSAFMLN…KAGLVDDVVP (190 aa)). The 3-hydroxyacyl-CoA dehydrogenase stretch occupies residues 306-714 (GPLNSVGILG…FWTNGETDQG (409 aa)).

This sequence in the N-terminal section; belongs to the enoyl-CoA hydratase/isomerase family. It in the central section; belongs to the 3-hydroxyacyl-CoA dehydrogenase family. Heterotetramer of two alpha chains (FadJ) and two beta chains (FadI).

It localises to the cytoplasm. The enzyme catalyses a (3S)-3-hydroxyacyl-CoA = a (2E)-enoyl-CoA + H2O. It catalyses the reaction a 4-saturated-(3S)-3-hydroxyacyl-CoA = a (3E)-enoyl-CoA + H2O. It carries out the reaction a (3S)-3-hydroxyacyl-CoA + NAD(+) = a 3-oxoacyl-CoA + NADH + H(+). The catalysed reaction is (3S)-3-hydroxybutanoyl-CoA = (3R)-3-hydroxybutanoyl-CoA. It participates in lipid metabolism; fatty acid beta-oxidation. Its function is as follows. Catalyzes the formation of a hydroxyacyl-CoA by addition of water on enoyl-CoA. Also exhibits 3-hydroxyacyl-CoA epimerase and 3-hydroxyacyl-CoA dehydrogenase activities. This chain is Fatty acid oxidation complex subunit alpha, found in Salmonella choleraesuis (strain SC-B67).